A 199-amino-acid chain; its full sequence is Transgelin-3 (199 aa).

Residues 24–136 (ADLENKLVDW…RTLMALGSVA (113 aa)) form the Calponin-homology (CH) domain. Ser163 is modified (phosphoserine). One copy of the Calponin-like repeat lies at 174 to 199 (IGLQMGSNKGASQAGMTGYGMPRQIM). Residues 176 to 188 (LQMGSNKGASQAG) show a composition bias toward polar residues. The interval 176–199 (LQMGSNKGASQAGMTGYGMPRQIM) is disordered.

The protein belongs to the calponin family. Widely expressed in the brain. Expression is increased in the superior frontal cortex of alcoholics, but not in the motor cortex or cerebellum.

This Homo sapiens (Human) protein is Transgelin-3 (TAGLN3).